Consider the following 156-residue polypeptide: Small ribosomal subunit protein uS7 (156 aa).

It belongs to the universal ribosomal protein uS7 family. As to quaternary structure, part of the 30S ribosomal subunit. Contacts proteins S9 and S11.

Its function is as follows. One of the primary rRNA binding proteins, it binds directly to 16S rRNA where it nucleates assembly of the head domain of the 30S subunit. Is located at the subunit interface close to the decoding center, probably blocks exit of the E-site tRNA. The chain is Small ribosomal subunit protein uS7 from Janthinobacterium sp. (strain Marseille) (Minibacterium massiliensis).